The following is a 437-amino-acid chain: Probable cysteine desulfurase (437 aa).

Lysine 258 is modified (N6-(pyridoxal phosphate)lysine).

It belongs to the class-V pyridoxal-phosphate-dependent aminotransferase family. Csd subfamily. Pyridoxal 5'-phosphate serves as cofactor.

The enzyme catalyses (sulfur carrier)-H + L-cysteine = (sulfur carrier)-SH + L-alanine. Its function is as follows. Catalyzes the removal of elemental sulfur and selenium atoms from L-cysteine, L-cystine, L-selenocysteine, and L-selenocystine to produce L-alanine. The sequence is that of Probable cysteine desulfurase (csd) from Haemophilus influenzae (strain ATCC 51907 / DSM 11121 / KW20 / Rd).